The chain runs to 471 residues: 5-hydroxytryptamine receptor 2A (471 aa).

Residues 1-80 (MDILCEENTS…LQEKNWSALL (80 aa)) are Extracellular-facing. N-linked (GlcNAc...) asparagine glycans are attached at residues Asn-8, Asn-38, Asn-44, Asn-51, and Asn-54. The chain crosses the membrane as a helical span at residues 81–97 (TAVVIILTIAGNILVIM). The Cytoplasmic segment spans residues 98-111 (AVSLEKKLQNATNY). The helical transmembrane segment at 112–137 (FLMSLAIADMLLGFLVMPVSMLTILY) threads the bilayer. Over 138-146 (GYRWPLPSK) the chain is Extracellular. Residues 147 to 171 (LCAVWIYLDVLFSTASIMHLCAISL) form a helical membrane-spanning segment. Cys-148 and Cys-227 form a disulfide bridge. Asp-155 is a binding site for serotonin. A DRY motif; important for ligand-induced conformation changes motif is present at residues 172–174 (DRY). Residues 172-191 (DRYVAIQNPIHHSRFNSRTK) are Cytoplasmic-facing. The chain crosses the membrane as a helical span at residues 192–215 (AFLKIIAVWTISVGISMPIPVFGL). Residues 216–232 (QDDSKVFKEGSCLLADD) lie on the Extracellular side of the membrane. The chain crosses the membrane as a helical span at residues 233–258 (NFVLIGSFVSFFIPLTIMVITYFLTI). Over 259–322 (KSLQKEATLC…QSISNEQKAC (64 aa)) the chain is Cytoplasmic. Ser-280 bears the Phosphoserine mark. The chain crosses the membrane as a helical span at residues 323 to 348 (KVLGIVFFLFVVMWCPFFITNIMAVI). Position 343 (Asn-343) interacts with serotonin. A disulfide bridge connects residues Cys-349 and Cys-353. Residues 349–356 (CKESCNED) are Extracellular-facing. A helical membrane pass occupies residues 357–382 (VIGALLNVFVWIGYLSSAVNPLVYTL). The short motif at 376-380 (NPLVY) is the NPxxY motif; important for ligand-induced conformation changes and signaling element. Residues 383–471 (FNKTYRSAFS…DGVNEKVSCV (89 aa)) lie on the Cytoplasmic side of the membrane. Residues 451–465 (QHSEEASKDNSDGVN) show a composition bias toward basic and acidic residues. Residues 451–471 (QHSEEASKDNSDGVNEKVSCV) are disordered. The PDZ-binding motif lies at 469 to 471 (SCV).

The protein belongs to the G-protein coupled receptor 1 family. As to quaternary structure, interacts (via C-terminus) with MPDZ and PATJ. May interact (via C-terminus) with MPP3, PRDX6, DLG4, DLG1, CASK, APBA1 and MAGI2. Interacts with GRM2 and DRD2; this may affect signaling. As to expression, detected in brain cortex (at protein level). Detected in blood platelets.

It is found in the cell membrane. Its subcellular location is the cell projection. It localises to the dendrite. The protein localises to the axon. The protein resides in the cytoplasmic vesicle. It is found in the membrane. Its subcellular location is the caveola. It localises to the presynapse. With respect to regulation, G-protein coupled receptor activity is regulated by lipids: oleamide increases HTR2A-mediated activity. Inhibited by IHCH-7179 small molecule: IHCH-7179 acts both as an agonist activator for HTR1A and as an antagonist inhibitor for HTR2A. In terms of biological role, G-protein coupled receptor for 5-hydroxytryptamine (serotonin). Also functions as a receptor for various drugs and psychoactive substances, including mescaline, psilocybin, 1-(2,5-dimethoxy-4-iodophenyl)-2-aminopropane (DOI) and lysergic acid diethylamide (LSD). Ligand binding causes a conformation change that triggers signaling via guanine nucleotide-binding proteins (G proteins) and modulates the activity of downstream effectors. HTR2A is coupled to G(q)/G(11) G alpha proteins and activates phospholipase C-beta, releasing diacylglycerol (DAG) and inositol 1,4,5-trisphosphate (IP3) second messengers that modulate the activity of phosphatidylinositol 3-kinase and promote the release of Ca(2+) ions from intracellular stores, respectively. Beta-arrestin family members inhibit signaling via G proteins and mediate activation of alternative signaling pathways. Affects neural activity, perception, cognition and mood. Plays a role in the regulation of behavior, including responses to anxiogenic situations and psychoactive substances. Plays a role in intestinal smooth muscle contraction, and may play a role in arterial vasoconstriction. (Microbial infection) Acts as a receptor for human JC polyomavirus/JCPyV. The polypeptide is 5-hydroxytryptamine receptor 2A (Homo sapiens (Human)).